The primary structure comprises 289 residues: Ribosomal RNA small subunit methyltransferase A (289 aa).

Residues asparagine 21, leucine 23, glycine 48, glutamate 69, aspartate 94, and asparagine 120 each contribute to the S-adenosyl-L-methionine site.

Belongs to the class I-like SAM-binding methyltransferase superfamily. rRNA adenine N(6)-methyltransferase family. RsmA subfamily.

The protein resides in the cytoplasm. It carries out the reaction adenosine(1518)/adenosine(1519) in 16S rRNA + 4 S-adenosyl-L-methionine = N(6)-dimethyladenosine(1518)/N(6)-dimethyladenosine(1519) in 16S rRNA + 4 S-adenosyl-L-homocysteine + 4 H(+). Its function is as follows. Specifically dimethylates two adjacent adenosines (A1518 and A1519) in the loop of a conserved hairpin near the 3'-end of 16S rRNA in the 30S particle. May play a critical role in biogenesis of 30S subunits. The protein is Ribosomal RNA small subunit methyltransferase A of Actinobacillus pleuropneumoniae serotype 7 (strain AP76).